We begin with the raw amino-acid sequence, 476 residues long: MTNSEQERWSRVKGRLRSTVGEDVYTSWFARMDLEAVQDESVHLSVPTRFLKSWIQAHYAERVLSAWQAEMPEVHRIDLSVRTAMRCATPAKEAPAAVEARRPERSDAKPVSDARAPVMTPVAASHDALGGSPLDPRLTFASFVVGRANTLAHAAARQVADGRRGDPVMFNPLYIHAGVGLGKTHLLQAVTWAGNAGGERKVLYLTAEKFMYGFVAALKSQTALAFKEALRGIDVLVIDDLQFLQGKSTQAEFCHTLNALIDAGRQVVIAADRPPSDLESLDDRVRSRLAGGLVVEMATLGEDLRLGILKSRVAAARAHHASFDVPEAVLDYLARSITHNGRDLEGAINRLLAHSKLNNQPVTLDMAEREVRDLVRPQEPKRIKIEDIQRVVARQYNVSRSDLLSSRRTANVVRPRQVAMYLAKTLTLRSLPEIGRRFGGRDHTTVLHAVRKIEALVGKDVALNDEVESLKRQLQD.

Residues 1–73 (MTNSEQERWS…LSAWQAEMPE (73 aa)) form a domain I, interacts with DnaA modulators region. A domain II region spans residues 73–132 (EVHRIDLSVRTAMRCATPAKEAPAAVEARRPERSDAKPVSDARAPVMTPVAASHDALGGS). The tract at residues 92–115 (KEAPAAVEARRPERSDAKPVSDAR) is disordered. Residues 99-112 (EARRPERSDAKPVS) are compositionally biased toward basic and acidic residues. Residues 133–355 (PLDPRLTFAS…GAINRLLAHS (223 aa)) are domain III, AAA+ region. Gly-180, Gly-182, Lys-183, and Thr-184 together coordinate ATP. Residues 356–476 (KLNNQPVTLD…VESLKRQLQD (121 aa)) form a domain IV, binds dsDNA region.

The protein belongs to the DnaA family. In terms of assembly, oligomerizes as a right-handed, spiral filament on DNA at oriC.

The protein resides in the cytoplasm. In terms of biological role, plays an essential role in the initiation and regulation of chromosomal replication. ATP-DnaA binds to the origin of replication (oriC) to initiate formation of the DNA replication initiation complex once per cell cycle. Binds the DnaA box (a 9 base pair repeat at the origin) and separates the double-stranded (ds)DNA. Forms a right-handed helical filament on oriC DNA; dsDNA binds to the exterior of the filament while single-stranded (ss)DNA is stabiized in the filament's interior. The ATP-DnaA-oriC complex binds and stabilizes one strand of the AT-rich DNA unwinding element (DUE), permitting loading of DNA polymerase. After initiation quickly degrades to an ADP-DnaA complex that is not apt for DNA replication. Binds acidic phospholipids. The protein is Chromosomal replication initiator protein DnaA of Bradyrhizobium sp. (strain ORS 278).